Consider the following 251-residue polypeptide: tRNA (guanine-N(7)-)-methyltransferase (251 aa).

The disordered stretch occupies residues 1–43 (MQPNEQPGTGPADTTLEQQDTAAAEVGHPRRIRSFVRRAGRTS). Residues 29–40 (PRRIRSFVRRAG) show a composition bias toward basic residues. S-adenosyl-L-methionine-binding residues include E82, E107, D134, and D157. D157 is a catalytic residue. K161 lines the substrate pocket. Positions 163 to 168 (RHNKRR) are interaction with RNA. Substrate contacts are provided by residues D193 and 228-231 (TKFE).

This sequence belongs to the class I-like SAM-binding methyltransferase superfamily. TrmB family.

The enzyme catalyses guanosine(46) in tRNA + S-adenosyl-L-methionine = N(7)-methylguanosine(46) in tRNA + S-adenosyl-L-homocysteine. It functions in the pathway tRNA modification; N(7)-methylguanine-tRNA biosynthesis. In terms of biological role, catalyzes the formation of N(7)-methylguanine at position 46 (m7G46) in tRNA. The chain is tRNA (guanine-N(7)-)-methyltransferase from Ralstonia nicotianae (strain ATCC BAA-1114 / GMI1000) (Ralstonia solanacearum).